The following is a 292-amino-acid chain: Golgi to ER traffic protein 2 (292 aa).

The segment covering 1-18 (MSELSAEEKRKLLRERRQ) has biased composition (basic and acidic residues). Positions 1–80 (MSELSAEEKR…TPLHDDPEVP (80 aa)) are disordered. The Cytoplasmic segment spans residues 1–158 (MSELSAEEKR…SQYHAYEQKQ (158 aa)). 2 stretches are compositionally biased toward polar residues: residues 29–47 (RLNN…NVTS) and 55–71 (ATTT…QSPT). A helical membrane pass occupies residues 159 to 179 (WKARFLVVRWIIHTLNFVYHY). The Lumenal portion of the chain corresponds to 180–205 (IASGYKLSASPYAFVRAQAVDSHVRT). The helical transmembrane segment at 206 to 225 (FFTAFLTVEVAVISAYFLVM) threads the bilayer. Residues 226-268 (SQPKFKDFSRENLVSRILSMASAVVPAVGRYQPLVTRALVYWN) lie on the Cytoplasmic side of the membrane. The helical transmembrane segment at 269 to 289 (GASIFVGDLMLMVFYFGITSV) threads the bilayer. Over 290–292 (LGN) the chain is Lumenal.

Belongs to the GET2 family. Component of the Golgi to ER traffic (GET) complex, which is composed of GET1, GET2 and GET3. Within the complex, GET1 and GET2 form a heterotetramer which is stabilized by phosphatidylinositol binding and which binds to the GET3 homodimer.

It localises to the endoplasmic reticulum membrane. Its subcellular location is the golgi apparatus membrane. Required for the post-translational delivery of tail-anchored (TA) proteins to the endoplasmic reticulum. Together with GET1, acts as a membrane receptor for soluble GET3, which recognizes and selectively binds the transmembrane domain of TA proteins in the cytosol. The GET complex cooperates with the HDEL receptor ERD2 to mediate the ATP-dependent retrieval of resident ER proteins that contain a C-terminal H-D-E-L retention signal from the Golgi to the ER. This chain is Golgi to ER traffic protein 2, found in Clavispora lusitaniae (strain ATCC 42720) (Yeast).